The sequence spans 680 residues: Enzymatic polyprotein (680 aa).

The segment at 41 to 131 (LHCFVDTGAS…LYEPFIQFTD (91 aa)) is protease. D46 is a catalytic residue. Residues 273–453 (LKVIKPSKSP…KKINFLGLEI (181 aa)) enclose the Reverse transcriptase domain.

It belongs to the caulimoviridae enzymatic polyprotein family.

It catalyses the reaction DNA(n) + a 2'-deoxyribonucleoside 5'-triphosphate = DNA(n+1) + diphosphate. Its function is as follows. Encodes for at least two polypeptides: protease (PR) and reverse transcriptase (RT). The protease processes the polyprotein in cis. Reverse transcriptase is multifunctional enzyme that converts the viral RNA genome into dsDNA in viral cytoplasmic capsids. This enzyme displays a DNA polymerase activity that can copy either DNA or RNA templates, and a ribonuclease H (RNase H) activity that cleaves the RNA strand of RNA-DNA heteroduplexes in a partially processive 3'- to 5'-endonucleasic mode. Neo-synthesized pregenomic RNA (pgRNA) are encapsidated, and reverse-transcribed inside the nucleocapsid. Partial (+)DNA is synthesized from the (-)DNA template and generates the relaxed circular DNA (RC-DNA) genome. After budding and infection, the RC-DNA migrates in the nucleus, and is converted into a plasmid-like covalently closed circular DNA (cccDNA). The polypeptide is Enzymatic polyprotein (Cauliflower mosaic virus (strain NY8153) (CaMV)).